A 185-amino-acid chain; its full sequence is Ribosome-recycling factor (185 aa).

The protein belongs to the RRF family.

Its subcellular location is the cytoplasm. Functionally, responsible for the release of ribosomes from messenger RNA at the termination of protein biosynthesis. May increase the efficiency of translation by recycling ribosomes from one round of translation to another. The polypeptide is Ribosome-recycling factor (Streptococcus thermophilus (strain ATCC BAA-491 / LMD-9)).